The primary structure comprises 460 residues: Chromosomal replication initiator protein DnaA 2 (460 aa).

Residues 1–68 are domain I, interacts with DnaA modulators; sequence MRAWEDFLLL…KTSLVNNNGK (68 aa). Residues 68-102 are domain II; that stretch reads KLIRVHITSLDKTAPFYKEKQIQQEKTAYFTMQYG. Residues 103–321 form a domain III, AAA+ region region; it reads NVNPEMTFGN…DALKLLSKRV (219 aa). Gly-151, Gly-153, Lys-154, and Thr-155 together coordinate ATP. A domain IV, binds dsDNA region spans residues 322 to 460; it reads AYKKLAQQLL…EFFPEEEISC (139 aa).

It belongs to the DnaA family. As to quaternary structure, oligomerizes as a right-handed, spiral filament on DNA at oriC.

It localises to the cytoplasm. In terms of biological role, plays an essential role in the initiation and regulation of chromosomal replication. ATP-DnaA binds to the origin of replication (oriC) to initiate formation of the DNA replication initiation complex once per cell cycle. Binds the DnaA box (a 9 base pair repeat at the origin) and separates the double-stranded (ds)DNA. Forms a right-handed helical filament on oriC DNA; dsDNA binds to the exterior of the filament while single-stranded (ss)DNA is stabiized in the filament's interior. The ATP-DnaA-oriC complex binds and stabilizes one strand of the AT-rich DNA unwinding element (DUE), permitting loading of DNA polymerase. After initiation quickly degrades to an ADP-DnaA complex that is not apt for DNA replication. Binds acidic phospholipids. The sequence is that of Chromosomal replication initiator protein DnaA 2 from Chlamydia caviae (strain ATCC VR-813 / DSM 19441 / 03DC25 / GPIC) (Chlamydophila caviae).